Reading from the N-terminus, the 554-residue chain is Heterochromatin protein 1-binding protein 3 (554 aa).

N-acetylalanine is present on alanine 2. A Phosphoserine modification is found at serine 6. 2 disordered regions span residues 30–136 (LGEK…KTIP) and 142–161 (SASQLARAQRQTPMASSPRP). Threonine 51 carries the post-translational modification Phosphothreonine. Acidic residues predominate over residues 60–71 (GEEEKPEPDGSS). Lysine 64 is covalently cross-linked (Glycyl lysine isopeptide (Lys-Gly) (interchain with G-Cter in SUMO2)). Glutamate 72 and threonine 85 each carry phosphothreonine. Positions 72–93 (EESISTVEEQENETPPATSSEA) are enriched in polar residues. The span at 94 to 129 (EQPKGEPESGEKEENNNKSAEEPKKDEKDQSKEKEK) shows a compositional bias: basic and acidic residues. A Glycyl lysine isopeptide (Lys-Gly) (interchain with G-Cter in SUMO2) cross-link involves residue lysine 97. The segment covering 142-156 (SASQLARAQRQTPMA) has biased composition (polar residues). 3 positions are modified to phosphoserine: serine 144, serine 157, and serine 158. The H15 1 domain maps to 159–234 (PRPKMDAILT…GASGSFVVVQ (76 aa)). Lysine 192 bears the N6-acetyllysine mark. Residues 229 to 254 (SFVVVQKSKPPQKSKNRKKGSALDPE) are disordered. Basic residues predominate over residues 238 to 248 (PPQKSKNRKKG). Position 249 is a phosphoserine (serine 249). The short motif at 255–259 (PQVKL) is the PxVxL motif element. 2 consecutive H15 domains span residues 255–330 (PQVK…QLKK) and 337–413 (LGGS…QLSF). Residue lysine 258 forms a Glycyl lysine isopeptide (Lys-Gly) (interchain with G-Cter in SUMO2) linkage. The interval 420 to 554 (GVLFPKKESG…AMKKSFKTKK (135 aa)) is disordered. Positions 430 to 451 (GSDDEDEDDDDDESSEDSEDEE) are enriched in acidic residues. 3 positions are modified to phosphoserine: serine 443, serine 444, and serine 447. The span at 464–475 (AKSQGKTASMKQ) shows a compositional bias: polar residues. 2 stretches are compositionally biased toward basic residues: residues 490–511 (GKVRPLPKKAPPKAKTPARKAR) and 544–554 (SAMKKSFKTKK).

Interacts (via PxVxL motif) with CBX5 (via Trp-174).

The protein resides in the nucleus. It is found in the chromosome. Functionally, component of heterochromatin that maintains heterochromatin integrity during G1/S progression and regulates the duration of G1 phase to critically influence cell proliferative capacity. May play a role in hypoxia-induced oncogenesis. This Mus musculus (Mouse) protein is Heterochromatin protein 1-binding protein 3 (Hp1bp3).